A 468-amino-acid polypeptide reads, in one-letter code: 6-phospho-beta-galactosidase (468 aa).

5 residues coordinate D-galactose 6-phosphate: Q19, H116, N159, E160, and N297. Catalysis depends on E160, which acts as the Proton donor. The active-site Nucleophile is the E375. S428, W429, K435, and Y437 together coordinate D-galactose 6-phosphate.

It belongs to the glycosyl hydrolase 1 family.

The enzyme catalyses a 6-phospho-beta-D-galactoside + H2O = D-galactose 6-phosphate + an alcohol. The protein operates within carbohydrate metabolism; lactose degradation; D-galactose 6-phosphate and beta-D-glucose from lactose 6-phosphate: step 1/1. This chain is 6-phospho-beta-galactosidase, found in Streptococcus pyogenes serotype M6 (strain ATCC BAA-946 / MGAS10394).